The chain runs to 376 residues: Queuine tRNA-ribosyltransferase (376 aa).

Aspartate 93 functions as the Proton acceptor in the catalytic mechanism. Substrate is bound by residues aspartate 93–phenylalanine 97, aspartate 147, glutamine 190, and glycine 217. The tract at residues glycine 248–aspartate 254 is RNA binding. Catalysis depends on aspartate 267, which acts as the Nucleophile. Zn(2+)-binding residues include cysteine 305, cysteine 307, cysteine 310, and histidine 336.

It belongs to the queuine tRNA-ribosyltransferase family. Homodimer. Within each dimer, one monomer is responsible for RNA recognition and catalysis, while the other monomer binds to the replacement base PreQ1. Zn(2+) is required as a cofactor.

It catalyses the reaction 7-aminomethyl-7-carbaguanine + guanosine(34) in tRNA = 7-aminomethyl-7-carbaguanosine(34) in tRNA + guanine. It participates in tRNA modification; tRNA-queuosine biosynthesis. Functionally, catalyzes the base-exchange of a guanine (G) residue with the queuine precursor 7-aminomethyl-7-deazaguanine (PreQ1) at position 34 (anticodon wobble position) in tRNAs with GU(N) anticodons (tRNA-Asp, -Asn, -His and -Tyr). Catalysis occurs through a double-displacement mechanism. The nucleophile active site attacks the C1' of nucleotide 34 to detach the guanine base from the RNA, forming a covalent enzyme-RNA intermediate. The proton acceptor active site deprotonates the incoming PreQ1, allowing a nucleophilic attack on the C1' of the ribose to form the product. After dissociation, two additional enzymatic reactions on the tRNA convert PreQ1 to queuine (Q), resulting in the hypermodified nucleoside queuosine (7-(((4,5-cis-dihydroxy-2-cyclopenten-1-yl)amino)methyl)-7-deazaguanosine). The sequence is that of Queuine tRNA-ribosyltransferase from Jannaschia sp. (strain CCS1).